We begin with the raw amino-acid sequence, 585 residues long: Protein-lysine N-methyltransferase EFM1 (585 aa).

The 259-residue stretch at 23–281 (PKISFRITED…AQDELFNNYG (259 aa)) folds into the SET domain. S-adenosyl-L-methionine is bound at residue tyrosine 280.

This sequence belongs to the class V-like SAM-binding methyltransferase superfamily. RKM1 family.

The protein resides in the cytoplasm. S-adenosyl-L-methionine-dependent protein-lysine N-methyltransferase that monomethylates elongation factor 1-alpha (TEF1/TEF2) at 'Lys-30'. The chain is Protein-lysine N-methyltransferase EFM1 from Saccharomyces cerevisiae (strain ATCC 204508 / S288c) (Baker's yeast).